A 671-amino-acid polypeptide reads, in one-letter code: DNA ligase (671 aa).

NAD(+)-binding positions include 36–40 (DAEYD), 85–86 (SL), and Glu116. Catalysis depends on Lys118, which acts as the N6-AMP-lysine intermediate. The NAD(+) site is built by Arg139, Glu176, Lys292, and Lys316. Zn(2+) contacts are provided by Cys410, Cys413, Cys428, and Cys434. The 81-residue stretch at 591–671 (QKGGRFQGMT…QFLAMFSEKE (81 aa)) folds into the BRCT domain.

It belongs to the NAD-dependent DNA ligase family. LigA subfamily. The cofactor is Mg(2+). Mn(2+) serves as cofactor.

The enzyme catalyses NAD(+) + (deoxyribonucleotide)n-3'-hydroxyl + 5'-phospho-(deoxyribonucleotide)m = (deoxyribonucleotide)n+m + AMP + beta-nicotinamide D-nucleotide.. In terms of biological role, DNA ligase that catalyzes the formation of phosphodiester linkages between 5'-phosphoryl and 3'-hydroxyl groups in double-stranded DNA using NAD as a coenzyme and as the energy source for the reaction. It is essential for DNA replication and repair of damaged DNA. The protein is DNA ligase of Acidithiobacillus ferrooxidans (strain ATCC 23270 / DSM 14882 / CIP 104768 / NCIMB 8455) (Ferrobacillus ferrooxidans (strain ATCC 23270)).